The primary structure comprises 106 residues: Tubulin-specific chaperone A (106 aa).

Serine 94 carries the phosphoserine modification.

It belongs to the TBCA family.

It is found in the cytoplasm. Its subcellular location is the cytoskeleton. Functionally, tubulin-folding protein; involved in the early step of the tubulin folding pathway. This chain is Tubulin-specific chaperone A (RBL2), found in Saccharomyces cerevisiae (strain ATCC 204508 / S288c) (Baker's yeast).